Reading from the N-terminus, the 543-residue chain is CTP synthase (543 aa).

Residues 1–265 are amidoligase domain; sequence MTRYIFVTGG…DDFVVERFGL (265 aa). Position 13 (Ser13) interacts with CTP. Ser13 provides a ligand contact to UTP. ATP-binding positions include 14–19 and Asp71; that span reads SLGKGI. Asp71 and Glu139 together coordinate Mg(2+). CTP-binding positions include 146-148, 186-191, and Lys222; these read DIE and KTKPTQ. Residues 186–191 and Lys222 contribute to the UTP site; that span reads KTKPTQ. The Glutamine amidotransferase type-1 domain occupies 290–541; sequence TIAMVGKYME…VKAALAQHQK (252 aa). Gly351 provides a ligand contact to L-glutamine. The active-site Nucleophile; for glutamine hydrolysis is the Cys378. L-glutamine is bound by residues 379–382, Glu402, and Arg469; that span reads LGMQ. Residues His514 and Glu516 contribute to the active site.

The protein belongs to the CTP synthase family. Homotetramer.

The catalysed reaction is UTP + L-glutamine + ATP + H2O = CTP + L-glutamate + ADP + phosphate + 2 H(+). The enzyme catalyses L-glutamine + H2O = L-glutamate + NH4(+). It catalyses the reaction UTP + NH4(+) + ATP = CTP + ADP + phosphate + 2 H(+). Its pathway is pyrimidine metabolism; CTP biosynthesis via de novo pathway; CTP from UDP: step 2/2. Allosterically activated by GTP, when glutamine is the substrate; GTP has no effect on the reaction when ammonia is the substrate. The allosteric effector GTP functions by stabilizing the protein conformation that binds the tetrahedral intermediate(s) formed during glutamine hydrolysis. Inhibited by the product CTP, via allosteric rather than competitive inhibition. Functionally, catalyzes the ATP-dependent amination of UTP to CTP with either L-glutamine or ammonia as the source of nitrogen. Regulates intracellular CTP levels through interactions with the four ribonucleotide triphosphates. The protein is CTP synthase of Pseudomonas syringae pv. tomato (strain ATCC BAA-871 / DC3000).